The chain runs to 164 residues: Protein-export protein SecB (164 aa).

This sequence belongs to the SecB family. In terms of assembly, homotetramer, a dimer of dimers. One homotetramer interacts with 1 SecA dimer.

The protein localises to the cytoplasm. Its function is as follows. One of the proteins required for the normal export of preproteins out of the cell cytoplasm. It is a molecular chaperone that binds to a subset of precursor proteins, maintaining them in a translocation-competent state. It also specifically binds to its receptor SecA. This Janthinobacterium sp. (strain Marseille) (Minibacterium massiliensis) protein is Protein-export protein SecB.